The chain runs to 1109 residues: Coiled-coil domain-containing protein 158 (1109 aa).

Over residues 1-12 (MESKACESKNED) the composition is skewed to basic and acidic residues. The interval 1 to 31 (MESKACESKNEDLLPSGITSKGGSSSPFFVT) is disordered. The segment covering 17–31 (GITSKGGSSSPFFVT) has biased composition (polar residues). Coiled coils occupy residues 71 to 166 (GKEH…MLKD) and 242 to 828 (VEDQ…QEQE). Disordered regions lie at residues 843–897 (LQGP…DPTR) and 952–1061 (HRSN…TGKT). Polar residues-rich tracts occupy residues 862–882 (ASVT…SFLS), 953–970 (RSNN…SSET), and 988–998 (SCFTFTSTASP). The span at 999–1019 (SGKMSASRSFSSSPKKSPVHS) shows a compositional bias: low complexity. Polar residues-rich tracts occupy residues 1020–1037 (LLTS…QYRS) and 1043–1061 (SPTS…TGKT). A coiled-coil region spans residues 1053–1109 (PSLETTGKTCQKLQNRLESLQTLVEDLQLKNQAMSSMIRNQEKRIQKVKDQEKMLLK).

The chain is Coiled-coil domain-containing protein 158 (Ccdc158) from Mus musculus (Mouse).